A 366-amino-acid chain; its full sequence is DNA primase large subunit PriL (366 aa).

Positions 227, 298, 307, and 314 each coordinate [4Fe-4S] cluster.

Belongs to the eukaryotic-type primase large subunit family. As to quaternary structure, heterodimer of a small subunit (PriS) and a large subunit (PriL). Requires [4Fe-4S] cluster as cofactor.

Regulatory subunit of DNA primase, an RNA polymerase that catalyzes the synthesis of short RNA molecules used as primers for DNA polymerase during DNA replication. Stabilizes and modulates the activity of the small subunit, increasing the rate of DNA synthesis, and conferring RNA synthesis capability. The DNA polymerase activity may enable DNA primase to also catalyze primer extension after primer synthesis. May also play a role in DNA repair. This is DNA primase large subunit PriL from Methanocella arvoryzae (strain DSM 22066 / NBRC 105507 / MRE50).